The primary structure comprises 761 residues: Subtilisin-like protease SBT3.15 (761 aa).

The signal sequence occupies residues 1-21 (MENSFLSSKLVFLLAIALVLF). Residues 22-120 (LNTELSFLTA…VIPNRILKLK (99 aa)) constitute a propeptide, activation peptide. An Inhibitor I9 domain is found at 41 to 119 (VYIVYLGQRE…HVIPNRILKL (79 aa)). The Peptidase S8 domain maps to 134 to 613 (PTSFSSSSSA…GGLVNPEKAA (480 aa)). An N-linked (GlcNAc...) asparagine glycan is attached at N151. D164 (charge relay system) is an active-site residue. N-linked (GlcNAc...) asparagine glycosylation is present at N197. H241 (charge relay system) is an active-site residue. 2 N-linked (GlcNAc...) asparagine glycosylation sites follow: N256 and N384. Catalysis depends on S544, which acts as the Charge relay system. N636 carries N-linked (GlcNAc...) asparagine glycosylation.

Belongs to the peptidase S8 family.

Its subcellular location is the secreted. The sequence is that of Subtilisin-like protease SBT3.15 from Arabidopsis thaliana (Mouse-ear cress).